A 149-amino-acid polypeptide reads, in one-letter code: Calmodulin (149 aa).

EF-hand domains are found at residues 8 to 43 (EQIA…LGQN), 44 to 79 (PTEA…KMAD), 81 to 116 (DTEE…LGEK), and 117 to 149 (LSDE…MLSK). Ca(2+) contacts are provided by Asp21, Asp23, Asp25, Asn27, Glu32, Asp57, Asp59, Asn61, Thr63, Glu68, Asp94, Asp96, Asn98, and Glu105. Lys116 bears the N6,N6,N6-trimethyllysine mark. Ca(2+) contacts are provided by Asp130, Asp132, Asp134, Gln136, and Glu141.

This sequence belongs to the calmodulin family.

Functionally, calmodulin mediates the control of a large number of enzymes, ion channels and other proteins by Ca(2+). Among the enzymes to be stimulated by the calmodulin-Ca(2+) complex are a number of protein kinases and phosphatases. In Physarum polycephalum (Slime mold), this protein is Calmodulin.